Consider the following 165-residue polypeptide: Chaperone protein SicA (165 aa).

It belongs to the LcrH/SycD chaperone family. Dimer or higher-order oligomers.

The protein localises to the cytoplasm. Type III secretion-associated chaperone required for SipB and SipC stabilization. Prevents premature association of SipB with SipC, which may lead to their targeting for degradation. Along with InvF, required for transcription activation of sigDE (sopB pipC), sicAsipBCDA, and sopE. The chain is Chaperone protein SicA (sicA) from Salmonella dublin.